The following is a 320-amino-acid chain: D-alanine--D-alanine ligase (320 aa).

Positions 120-314 (SSWFFANSIN…FTNLIAEIIK (195 aa)) constitute an ATP-grasp domain. 147–198 (MKRPYVIKPLTQGSSIGVEVIFEEDDFNFADYDFPYGDQVVIERYIKGREFQ) lines the ATP pocket. Residues Glu267, Glu281, and Asn283 each contribute to the Mg(2+) site.

It belongs to the D-alanine--D-alanine ligase family. Mg(2+) serves as cofactor. The cofactor is Mn(2+).

Its subcellular location is the cytoplasm. It catalyses the reaction 2 D-alanine + ATP = D-alanyl-D-alanine + ADP + phosphate + H(+). The protein operates within cell wall biogenesis; peptidoglycan biosynthesis. In terms of biological role, cell wall formation. The sequence is that of D-alanine--D-alanine ligase from Rickettsia akari (strain Hartford).